The following is a 231-amino-acid chain: Regulatory factor X-associated protein (231 aa).

Residues 1–163 (MEAQAVPEGS…GNVKLEESTD (163 aa)) form a disordered region. A compositionally biased stretch (acidic residues) spans 50 to 65 (ADAEDEAGDDDADLLD). A compositionally biased stretch (basic residues) spans 115–138 (KQRKPWMCKKHRNKMYKDKYKKKK). A Nuclear localization signal motif is present at residues 123 to 138 (KKHRNKMYKDKYKKKK). Lysine 157 is covalently cross-linked (Glycyl lysine isopeptide (Lys-Gly) (interchain with G-Cter in SUMO2)).

RFX consists of at least 3 different subunits; RFXAP, RFX5 and RFX-B/RFXANK; with each subunit representing a separate complementation group. RFX forms cooperative DNA binding complexes with X2BP and CBF/NF-Y. RFX associates with CIITA to form an active transcriptional complex. Phosphorylated.

Its subcellular location is the nucleus. In terms of biological role, part of the RFX complex that binds to the X-box of MHC II promoters. The chain is Regulatory factor X-associated protein (Rfxap) from Mus musculus (Mouse).